We begin with the raw amino-acid sequence, 278 residues long: HAUS augmin-like complex subunit 1 (278 aa).

Coiled-coil stretches lie at residues 49–79, 124–177, and 249–277; these read RDVY…LMES, SDLF…KVDN, and SLAQ…DMME.

Belongs to the HAUS1 family. In terms of assembly, component of the HAUS augmin-like complex. The complex interacts with the gamma-tubulin ring complex and this interaction is required for spindle assembly. Associates with microtubules. The interaction with microtubules is strong during mitosis, while it is weak or absent during interphase. It is unclear whether this interaction is direct or indirect. Interacts with EML3 (phosphorylated at 'Thr-881'). As to expression, widely expressed. Expressed in pancreas, kidney, skeletal muscle, liver and heart. Weakly expressed in lung, brain and placenta.

The protein localises to the cytoplasm. Its subcellular location is the cytoskeleton. It is found in the microtubule organizing center. The protein resides in the centrosome. It localises to the spindle. The protein localises to the spindle pole. Functionally, contributes to mitotic spindle assembly, maintenance of centrosome integrity and completion of cytokinesis as part of the HAUS augmin-like complex. This chain is HAUS augmin-like complex subunit 1 (HAUS1), found in Homo sapiens (Human).